The chain runs to 92 residues: uncharacterized protein (92 aa).

Residues 25-83 form the HTH cro/C1-type domain; that stretch reads LEEKLKQEKIDRKYLAQVTNIPYTTVSRIMRAEANREFNPEIDTILKIAKYFNCTMDEV. A DNA-binding region (H-T-H motif) is located at residues 36–55; that stretch reads RKYLAQVTNIPYTTVSRIMR.

This is an uncharacterized protein from Rickettsia prowazekii (strain Madrid E).